Consider the following 230-residue polypeptide: Peptidyl-prolyl cis-trans isomerase FKBP16-4, chloroplastic (230 aa).

The N-terminal 56 residues, 1–56 (MILTMKLVHPLHHSLSSSIPFPSRKRQSKPYRCSLPSPGCEKVIRTETVLPPAPVS), are a transit peptide targeting the chloroplast. Positions 123-217 (GSRVAVHYVA…ELDIELLSIK (95 aa)) constitute a PPIase FKBP-type domain.

This sequence belongs to the FKBP-type PPIase family.

It is found in the plastid. The protein localises to the chloroplast thylakoid lumen. It catalyses the reaction [protein]-peptidylproline (omega=180) = [protein]-peptidylproline (omega=0). PPIases accelerate the folding of proteins. It catalyzes the cis-trans isomerization of proline imidic peptide bonds in oligopeptides. The polypeptide is Peptidyl-prolyl cis-trans isomerase FKBP16-4, chloroplastic (FKBP16-4) (Arabidopsis thaliana (Mouse-ear cress)).